Consider the following 395-residue polypeptide: Leukosialin (395 aa).

An N-terminal signal peptide occupies residues 1–19; it reads MALHLLLLFGACWVQVASP. Residues 20–248 lie on the Extracellular side of the membrane; that stretch reads DSLQRTTMLP…TRSPSQESSG (229 aa). Residues 27 to 56 are compositionally biased toward polar residues; it reads MLPSTPHITAPSTSEAQNASPSVSVGSGTV. The tract at residues 27–245 is disordered; that stretch reads MLPSTPHITA…PITTRSPSQE (219 aa). Positions 73–88 are enriched in low complexity; it reads SLTPLETTELSSLETS. 2 stretches are compositionally biased toward polar residues: residues 89–111 and 145–154; these read AGAS…SKTS and TAASTSISKG. The span at 155-166 shows a compositional bias: low complexity; the sequence is TSAPPTTVTTSS. A glycan (N-linked (GlcNAc...) asparagine) is linked at asparagine 167. The span at 167–196 shows a compositional bias: polar residues; it reads NETSGPSVATTVSSKTSGPPVTTATGSLGP. Low complexity predominate over residues 205–241; it reads ATTATSSVESSSVARGTSVSSRKTSTTSTQDPITTRS. A helical transmembrane segment spans residues 249 to 271; it reads MLLVPMLIALVVVLALVALLLLW. Positions 272-302 are required for interaction with EZR, MSN and RDX and for co-localization to microvilli; sequence RQRQKRRTGALTLSGGGKRNGVVDAWAGPAR. Residues 272 to 395 lie on the Cytoplasmic side of the membrane; sequence RQRQKRRTGA…AKDEAAPQSL (124 aa). Positions 276–290 match the Nuclear localization signal motif; that stretch reads KRRTGALTLSGGGKR. Residues serine 285 and serine 328 each carry the phosphoserine modification. The disordered stretch occupies residues 303 to 395; the sequence is VPDEEATTTS…AKDEAAPQSL (93 aa). Residues 327-338 are compositionally biased toward polar residues; the sequence is GSGQRPTLTTFF. The residue at position 333 (threonine 333) is a Phosphothreonine. A phosphoserine mark is found at serine 339 and serine 343. A Phosphoserine; by PKC/PRKCQ modification is found at serine 347. Serine 371 is modified (phosphoserine). Threonine 378 is modified (phosphothreonine). The segment covering 385 to 395 has biased composition (basic and acidic residues); that stretch reads QAKDEAAPQSL.

In terms of assembly, interacts with SIGLEC1. Interacts with isoform 2 of HIPK2. Interacts with CTNNB1. Interacts with RDX (via FERM domain). Interacts with EZR. Interacts with MSN. Post-translationally, phosphorylation at Ser-347 is regulated by chemokines, requires its association with ERM proteins (EZR, RDX and MSN) and is essential for its function in the regulation of T-cell trafficking to lymph nodes. In terms of processing, has a high content of sialic acid and O-linked carbohydrate structures. Cleavage by CTSG releases its extracellular domain and triggers its intramembrane proteolysis by gamma-secretase releasing the CD43 cytoplasmic tail chain (CD43-ct) which translocates to the nucleus. Post-translationally, sumoylated. Cell surface of thymocytes, T-lymphocytes, neutrophils, plasma cells and myelomas.

Its subcellular location is the membrane. It localises to the cell projection. It is found in the microvillus. The protein resides in the uropodium. The protein localises to the nucleus. Its subcellular location is the PML body. In terms of biological role, predominant cell surface sialoprotein of leukocytes which regulates multiple T-cell functions, including T-cell activation, proliferation, differentiation, trafficking and migration. Positively regulates T-cell trafficking to lymph-nodes via its association with ERM proteins (EZR, RDX and MSN). Negatively regulates Th2 cell differentiation and predisposes the differentiation of T-cells towards a Th1 lineage commitment. Promotes the expression of IFN-gamma by T-cells during T-cell receptor (TCR) activation of naive cells and induces the expression of IFN-gamma by CD4(+) T-cells and to a lesser extent by CD8(+) T-cells. Plays a role in preparing T-cells for cytokine sensing and differentiation into effector cells by inducing the expression of cytokine receptors IFNGR and IL4R, promoting IFNGR and IL4R signaling and by mediating the clustering of IFNGR with TCR. Acts as a major E-selectin ligand responsible for Th17 cell rolling on activated vasculature and recruitment during inflammation. Mediates Th17 cells, but not Th1 cells, adhesion to E-selectin. Acts as a T-cell counter-receptor for SIGLEC1. Its function is as follows. Protects cells from apoptotic signals, promoting cell survival. The chain is Leukosialin (Spn) from Mus musculus (Mouse).